The sequence spans 215 residues: 3-isopropylmalate dehydratase small subunit (215 aa).

This sequence belongs to the LeuD family. LeuD type 1 subfamily. Heterodimer of LeuC and LeuD.

It carries out the reaction (2R,3S)-3-isopropylmalate = (2S)-2-isopropylmalate. The protein operates within amino-acid biosynthesis; L-leucine biosynthesis; L-leucine from 3-methyl-2-oxobutanoate: step 2/4. Catalyzes the isomerization between 2-isopropylmalate and 3-isopropylmalate, via the formation of 2-isopropylmaleate. This chain is 3-isopropylmalate dehydratase small subunit, found in Stutzerimonas stutzeri (strain A1501) (Pseudomonas stutzeri).